Reading from the N-terminus, the 158-residue chain is MILSDRDIKTYINSKKLVINPLSEDTIRENGVDLKIGNEIVRIKENMEKEVGDEFIIYPNEHVLLTTKEYIKLSNDIIAFCNLRSTFARKGLLIPPTIVDAGFEGQLTIELVGSSIPVKLKSGERFLHLIFARTLTPVEKPYNGKYQKQKGVTLAKED.

This sequence belongs to the dUTPase family. Requires Mg(2+) as cofactor.

The catalysed reaction is dUTP + H2O = dUMP + diphosphate + H(+). It functions in the pathway pyrimidine metabolism; dUMP biosynthesis; dUMP from dCTP (dUTP route): step 1/2. Its function is as follows. This enzyme is involved in nucleotide metabolism: it produces dUMP, the immediate precursor of thymidine nucleotides and it decreases the intracellular concentration of dUTP so that uracil cannot be incorporated into DNA. It does probably not deaminate dCTP. The protein is Probable deoxyuridine 5'-triphosphate nucleotidohydrolase of Sulfolobus islandicus rod-shaped virus 1 (SIRV-1).